The following is a 1203-amino-acid chain: DNA-directed RNA polymerase subunit beta' (1203 aa).

Zn(2+) contacts are provided by Cys-60, Cys-62, Cys-75, and Cys-78. Mg(2+) contacts are provided by Asp-449, Asp-451, and Asp-453. Positions 818, 892, 899, and 902 each coordinate Zn(2+).

The protein belongs to the RNA polymerase beta' chain family. As to quaternary structure, the RNAP catalytic core consists of 2 alpha, 1 beta, 1 beta' and 1 omega subunit. When a sigma factor is associated with the core the holoenzyme is formed, which can initiate transcription. Mg(2+) is required as a cofactor. The cofactor is Zn(2+).

The catalysed reaction is RNA(n) + a ribonucleoside 5'-triphosphate = RNA(n+1) + diphosphate. Functionally, DNA-dependent RNA polymerase catalyzes the transcription of DNA into RNA using the four ribonucleoside triphosphates as substrates. The protein is DNA-directed RNA polymerase subunit beta' of Bacillus anthracis.